The following is a 148-amino-acid chain: Ribosome-binding factor A (148 aa).

A disordered region spans residues 120–148; that stretch reads AKAREGASYAGDADPYRTAEPDADDAPRA. Over residues 133–148 the composition is skewed to basic and acidic residues; it reads DPYRTAEPDADDAPRA.

It belongs to the RbfA family. As to quaternary structure, monomer. Binds 30S ribosomal subunits, but not 50S ribosomal subunits or 70S ribosomes.

The protein resides in the cytoplasm. Its function is as follows. One of several proteins that assist in the late maturation steps of the functional core of the 30S ribosomal subunit. Associates with free 30S ribosomal subunits (but not with 30S subunits that are part of 70S ribosomes or polysomes). Required for efficient processing of 16S rRNA. May interact with the 5'-terminal helix region of 16S rRNA. This is Ribosome-binding factor A from Micrococcus luteus (strain ATCC 4698 / DSM 20030 / JCM 1464 / CCM 169 / CCUG 5858 / IAM 1056 / NBRC 3333 / NCIMB 9278 / NCTC 2665 / VKM Ac-2230) (Micrococcus lysodeikticus).